Reading from the N-terminus, the 954-residue chain is E3 ubiquitin-protein ligase MIB2 (954 aa).

Residues 1–80 form the MIB/HERC2 1 domain; the sequence is MDLDPYASMQ…AYDLLLYDNA (80 aa). The segment at 86 to 138 adopts a ZZ-type zinc-finger fold; the sequence is HPNIICDCCKKHGIRGMRWKCKMCFDYDLCTQCYMNNKHDLSHAFERYETAHS. 8 residues coordinate Zn(2+): Cys91, Cys94, Cys106, Cys109, Cys115, Cys118, His124, and His128. Positions 149–227 constitute an MIB/HERC2 2 domain; the sequence is LTRITLKGTF…KVDLKCTVEA (79 aa). ANK repeat units lie at residues 464–493, 497–526, 530–559, 563–591, 597–626, 631–661, 665–694, 698–726, and 766–795; these read QGRT…TVNL, EGDT…GADL, AKCT…DVNL, HGDT…NIDF, QGFN…QLVD, DGFT…DVNV, RNQT…DVNA, DGDT…EMGS, and RGKS…EQQV. 2 consecutive RING-type zinc fingers follow at residues 830–865 and 910–943; these read CLVC…IKCQ and CPIC…PICR.

The protein resides in the cytoplasm. The enzyme catalyses S-ubiquitinyl-[E2 ubiquitin-conjugating enzyme]-L-cysteine + [acceptor protein]-L-lysine = [E2 ubiquitin-conjugating enzyme]-L-cysteine + N(6)-ubiquitinyl-[acceptor protein]-L-lysine.. It participates in protein modification; protein ubiquitination. E3 ubiquitin-protein ligase that mediates ubiquitination of Delta receptors, which act as ligands of Notch proteins. Positively regulates the Delta-mediated Notch signaling by ubiquitinating the intracellular domain of Delta, leading to endocytosis of Delta receptors. This is E3 ubiquitin-protein ligase MIB2 (MIB2) from Gallus gallus (Chicken).